Here is a 668-residue protein sequence, read N- to C-terminus: MADITLDEAKKEASLLRNQLDKWADAYYSKDAPEVEDNVYDQKYSRLLELEKQFPEIVTPDSITQRVGGEIDSDFTKVEHAIPMLSMGDVFSKDELKDFDQRMQKLVGHPVEYNVELKIDGLSLSLEYENGKLMRASTRGNGYVGEDVTANARYIADIPQTLPEPLTIEVRGECYMGKEAFAKLNEERENEGLSVFANPRNAAAGSLRQLDPKVTKKRQLSTFIYTWVNPPEDITSQHEAIKRMQELGFHTNETGQKLASLEEIFAFIDEYTARRDSLAYGIDGIVLKIDDLNIERSLGNTVKVPRWEIAYKFPPEEQETIVRDIVWTVGRTGVVTPTAVMDPVQLAGTTVARASLHNPDYLNEKDVRLGDTVKLHKAGDIIPEISEVVLSKRPVDSVPYVIPENCPSCGHKLVHLQDEVALRCINPSCPAQVEEGITHFASRPAMNIAGLGPKIVKQLIANDLVHNVADLYHLSAEDLAQLDHFKEKSINNLLTAIDNSKKNSVELLITGLGIDHVGAKAARLIAQKFKNLAKIMSLGVQDLASIDTIGMTIAESMTTYFAQPEAQEMIADLEKSGLNMEYLGEDEPEDIPDNPFKDKTVVLTGKLEHYTRSEFTKRLQALGAKVTGSVSKKTNYVIYGQDAGSKYNKAEQLGIPLLTEEEAIAQIK.

Residues 37–41, 86–87, and glutamate 116 contribute to the NAD(+) site; these read DNVYD and SM. Lysine 118 serves as the catalytic N6-AMP-lysine intermediate. NAD(+) is bound by residues arginine 139, glutamate 173, lysine 288, and lysine 312. Zn(2+)-binding residues include cysteine 406, cysteine 409, cysteine 424, and cysteine 429. One can recognise a BRCT domain in the interval 591–668; the sequence is IPDNPFKDKT…TEEEAIAQIK (78 aa).

Belongs to the NAD-dependent DNA ligase family. LigA subfamily. The cofactor is Mg(2+). Requires Mn(2+) as cofactor.

The catalysed reaction is NAD(+) + (deoxyribonucleotide)n-3'-hydroxyl + 5'-phospho-(deoxyribonucleotide)m = (deoxyribonucleotide)n+m + AMP + beta-nicotinamide D-nucleotide.. DNA ligase that catalyzes the formation of phosphodiester linkages between 5'-phosphoryl and 3'-hydroxyl groups in double-stranded DNA using NAD as a coenzyme and as the energy source for the reaction. It is essential for DNA replication and repair of damaged DNA. The protein is DNA ligase of Lactobacillus acidophilus (strain ATCC 700396 / NCK56 / N2 / NCFM).